The sequence spans 546 residues: Probable protein kinase UbiB (546 aa).

The Protein kinase domain maps to D123–L501. Residues L129 to V137 and K152 contribute to the ATP site. The active-site Proton acceptor is the D287. The next 2 membrane-spanning stretches (helical) occupy residues A498 to T517 and I522 to L541.

The protein belongs to the ABC1 family. UbiB subfamily.

The protein resides in the cell inner membrane. Its pathway is cofactor biosynthesis; ubiquinone biosynthesis [regulation]. Is probably a protein kinase regulator of UbiI activity which is involved in aerobic coenzyme Q (ubiquinone) biosynthesis. The polypeptide is Probable protein kinase UbiB (Aeromonas hydrophila subsp. hydrophila (strain ATCC 7966 / DSM 30187 / BCRC 13018 / CCUG 14551 / JCM 1027 / KCTC 2358 / NCIMB 9240 / NCTC 8049)).